Here is a 317-residue protein sequence, read N- to C-terminus: Adenosine receptor A3 (317 aa).

Over 1 to 14 (MPVNSTAVSWTSVT) the chain is Extracellular. N-linked (GlcNAc...) asparagine glycosylation is present at Asn4. A helical transmembrane segment spans residues 15–37 (YITVEILIGLCAIVGNVLVIWVV). Topologically, residues 38–48 (KLNPSLQTTTF) are cytoplasmic. The helical transmembrane segment at 49–72 (YFIVSLALADIAVGVLVMPLAIVI) threads the bilayer. The Extracellular segment spans residues 73-84 (SLGVTIHFYSCL). A disulfide bridge connects residues Cys83 and Cys165. The helical transmembrane segment at 85–106 (FMTCLMLIFTHASIMSLLAIAV) threads the bilayer. The Cytoplasmic segment spans residues 107–126 (DRYLRVKLTVRYRRVTTQRR). The helical transmembrane segment at 127-148 (IWLALGLCWLVSFLVGLTPMFG) threads the bilayer. Residues 149-176 (WNMKLSSADENLTFLPCRFRSVMRMDYM) lie on the Extracellular side of the membrane. The N-linked (GlcNAc...) asparagine glycan is linked to Asn159. A helical transmembrane segment spans residues 177–197 (VYFSFFLWILVPLVVMCAIYF). Over 198 to 230 (DIFYIIRNRLSQSFSGSRETGAFYGREFKTAKS) the chain is Cytoplasmic. Residues 231 to 254 (LLLVLFLFALCWLPLSIINCILYF) form a helical membrane-spanning segment. Residues 255 to 260 (DGQVPQ) lie on the Extracellular side of the membrane. Residues 261–283 (TVLYLGILLSHANSMMNPIVYAY) traverse the membrane as a helical segment. The Cytoplasmic segment spans residues 284–317 (KIKKFKETYLLILKACVMCQPSKSMDPSTEQTSE). Cys302 carries S-palmitoyl cysteine lipidation.

The protein belongs to the G-protein coupled receptor 1 family. Phosphorylation on Thr-315 and Ser-316 may be crucial for rapid desensitization. Phosphorylation on Thr-315 may be necessary for phosphorylation on Ser-316 to occur. As to expression, most abundant in lung, spleen and pineal gland. Moderate expression in brain, kidney and testis.

It localises to the cell membrane. Its function is as follows. Receptor for adenosine. The activity of this receptor is mediated by G proteins which inhibits adenylyl cyclase. The chain is Adenosine receptor A3 (ADORA3) from Ovis aries (Sheep).